The sequence spans 205 residues: Phospholipase D (205 aa).

A signal peptide spans 1–22 (MKSKNNKFIAVSISFILGIALG). Residues 142-169 (VPGIAHNKVIIIDKKKVITGSFNFTVSA) enclose the PLD phosphodiesterase domain. Active-site residues include H147, K149, and D154.

Belongs to the phospholipase D family. As to quaternary structure, homodimer.

The protein localises to the secreted. It carries out the reaction a 1,2-diacyl-sn-glycero-3-phosphocholine + H2O = a 1,2-diacyl-sn-glycero-3-phosphate + choline + H(+). Functionally, could be a virulence factor. The chain is Phospholipase D (pld) from Rickettsia prowazekii (strain Madrid E).